The primary structure comprises 282 residues: Pantothenate synthetase (282 aa).

M30–H37 serves as a coordination point for ATP. H37 acts as the Proton donor in catalysis. Q61 contacts (R)-pantoate. Residue Q61 participates in beta-alanine binding. G149–D152 contacts ATP. Q155 is a (R)-pantoate binding site. Residues A178 and M186–R189 each bind ATP.

This sequence belongs to the pantothenate synthetase family. Homodimer.

Its subcellular location is the cytoplasm. It carries out the reaction (R)-pantoate + beta-alanine + ATP = (R)-pantothenate + AMP + diphosphate + H(+). It functions in the pathway cofactor biosynthesis; (R)-pantothenate biosynthesis; (R)-pantothenate from (R)-pantoate and beta-alanine: step 1/1. In terms of biological role, catalyzes the condensation of pantoate with beta-alanine in an ATP-dependent reaction via a pantoyl-adenylate intermediate. This is Pantothenate synthetase from Marinomonas sp. (strain MWYL1).